A 350-amino-acid polypeptide reads, in one-letter code: MDINLFDFHLPEELIAQIPLEERETSRLMVLDRETGDIEHKHFADILSYLQEGDCLVLNETKVMPARLHGVKEDTGAHIEVLLLKQEEGDKWETLIKPAKRVKEGTVISFGEGKLKATCIGTADQGGRQLEFSYDGIFYEILDELGEMPLPPYIKETLEDRDRYQTVYAKEIGSAAAPTAGLHFTEELLEKLKQKGVGLAFITLHVGLGTFRPVSADTIEEHHMHAEYYHMSEETAALLNRVKEDGGRIITVGTTSTRTLETIATDHSGKLCAASGWTDIFMYPGYEFKAIDGLITNFHLPKSTLIMLVSAFSNRDNVLHAYNEAVKEKYRFFSFGDAMFVASHAKMRNK.

Belongs to the QueA family. As to quaternary structure, monomer.

It localises to the cytoplasm. The catalysed reaction is 7-aminomethyl-7-carbaguanosine(34) in tRNA + S-adenosyl-L-methionine = epoxyqueuosine(34) in tRNA + adenine + L-methionine + 2 H(+). It participates in tRNA modification; tRNA-queuosine biosynthesis. Transfers and isomerizes the ribose moiety from AdoMet to the 7-aminomethyl group of 7-deazaguanine (preQ1-tRNA) to give epoxyqueuosine (oQ-tRNA). The polypeptide is S-adenosylmethionine:tRNA ribosyltransferase-isomerase (Bacillus mycoides (strain KBAB4) (Bacillus weihenstephanensis)).